The chain runs to 460 residues: Nuclear distribution protein PAC1-1 (460 aa).

One can recognise a LisH domain in the interval 9 to 41 (QADELHRALIAYLTAANLPNTAAALREELNLGE). The stretch at 74-96 (LVTQIMDLESRNHILQSELDNAT) forms a coiled coil. The span at 90 to 100 (SELDNATPTSR) shows a compositional bias: polar residues. The tract at residues 90 to 115 (SELDNATPTSRQNKDPVAWLPRAPPR) is disordered. 8 WD repeats span residues 120–161 (SHRD…RTIK), 163–203 (HTKA…KNIR), 207–247 (GHDH…CVKT), 250–289 (GHAE…PEPR), 294–354 (GHEH…KTLA), 355–394 (GHDN…KCVK), 399–439 (AHGH…VTPD), and 441–460 (QIRC…IFAN).

It belongs to the WD repeat LIS1/nudF family. Self-associates. Interacts with NDL1 and dynein.

Its subcellular location is the cytoplasm. It localises to the cytoskeleton. The protein localises to the spindle pole. Functionally, positively regulates the activity of the minus-end directed microtubule motor protein dynein. May enhance dynein-mediated microtubule sliding by targeting dynein to the microtubule plus end. Required for nuclear migration during vegetative growth as well as development. Required for retrograde early endosome (EE) transport from the hyphal tip. Required for localization of dynein to the mitotic spindle poles. Recruits additional proteins to the dynein complex at SPBs. The protein is Nuclear distribution protein PAC1-1 of Sordaria macrospora (strain ATCC MYA-333 / DSM 997 / K(L3346) / K-hell).